An 87-amino-acid chain; its full sequence is Small ribosomal subunit protein bS20 (87 aa).

A disordered region spans residues 1-22 (MANIKSQIKRIGTNKKAQERNK).

This sequence belongs to the bacterial ribosomal protein bS20 family.

Its function is as follows. Binds directly to 16S ribosomal RNA. The chain is Small ribosomal subunit protein bS20 from Clavibacter sepedonicus (Clavibacter michiganensis subsp. sepedonicus).